A 39-amino-acid polypeptide reads, in one-letter code: Cytochrome b559 subunit beta (39 aa).

A helical transmembrane segment spans residues 14 to 30 (WLAVHGLAIPTVFFLGS). A heme-binding site is contributed by His-18.

It belongs to the PsbE/PsbF family. Heterodimer of an alpha subunit and a beta subunit. PSII is composed of 1 copy each of membrane proteins PsbA, PsbB, PsbC, PsbD, PsbE, PsbF, PsbH, PsbI, PsbJ, PsbK, PsbL, PsbM, PsbT, PsbX, PsbY, PsbZ, Psb30/Ycf12, at least 3 peripheral proteins of the oxygen-evolving complex and a large number of cofactors. It forms dimeric complexes. It depends on heme b as a cofactor.

Its subcellular location is the plastid membrane. This b-type cytochrome is tightly associated with the reaction center of photosystem II (PSII). PSII is a light-driven water:plastoquinone oxidoreductase that uses light energy to abstract electrons from H(2)O, generating O(2) and a proton gradient subsequently used for ATP formation. It consists of a core antenna complex that captures photons, and an electron transfer chain that converts photonic excitation into a charge separation. The chain is Cytochrome b559 subunit beta from Cuscuta gronovii (Common dodder).